Reading from the N-terminus, the 79-residue chain is Toxin ICK-20 (79 aa).

The N-terminal stretch at 1–20 (MMKYFLVLCLVVLGVAAVQA) is a signal peptide. 4 disulfides stabilise this stretch: Cys-43–Cys-57, Cys-50–Cys-61, Cys-56–Cys-78, and Cys-68–Cys-74. The N-linked (GlcNAc...) asparagine glycan is linked to Asn-71.

The protein belongs to the neurotoxin 13 (insecticidal toxin ABC) family. ICK-21 subfamily. As to expression, expressed by the venom gland.

It is found in the secreted. In terms of biological role, ion channel inhibitor. In Trittame loki (Brush-footed trapdoor spider), this protein is Toxin ICK-20.